We begin with the raw amino-acid sequence, 339 residues long: D-erythrose-4-phosphate dehydrogenase (339 aa).

12-13 is a binding site for NAD(+); the sequence is RI. Substrate-binding positions include 154 to 156, R200, 213 to 214, and R236; these read SCT and TK. C155 acts as the Nucleophile in catalysis. N318 contributes to the NAD(+) binding site.

The protein belongs to the glyceraldehyde-3-phosphate dehydrogenase family. Epd subfamily. In terms of assembly, homotetramer.

It localises to the cytoplasm. It catalyses the reaction D-erythrose 4-phosphate + NAD(+) + H2O = 4-phospho-D-erythronate + NADH + 2 H(+). It participates in cofactor biosynthesis; pyridoxine 5'-phosphate biosynthesis; pyridoxine 5'-phosphate from D-erythrose 4-phosphate: step 1/5. Catalyzes the NAD-dependent conversion of D-erythrose 4-phosphate to 4-phosphoerythronate. This is D-erythrose-4-phosphate dehydrogenase from Enterobacter sp. (strain 638).